The primary structure comprises 326 residues: Methionine import ATP-binding protein MetN (326 aa).

Positions 1–226 (MVFYTIGPQT…PQQPITRQFV (226 aa)) constitute an ABC transporter domain. Residue 23–30 (GYSGAGKS) coordinates ATP.

This sequence belongs to the ABC transporter superfamily. Methionine importer (TC 3.A.1.24) family. As to quaternary structure, the complex is composed of two ATP-binding proteins (MetN), two transmembrane proteins (MetI) and a solute-binding protein (MetQ).

The protein resides in the cell inner membrane. It catalyses the reaction L-methionine(out) + ATP + H2O = L-methionine(in) + ADP + phosphate + H(+). The catalysed reaction is D-methionine(out) + ATP + H2O = D-methionine(in) + ADP + phosphate + H(+). In terms of biological role, part of the ABC transporter complex MetNIQ involved in methionine import. Responsible for energy coupling to the transport system. This is Methionine import ATP-binding protein MetN from Erwinia pyrifoliae (strain DSM 12162 / Ep1/96).